A 208-amino-acid chain; its full sequence is Small ribosomal subunit protein uS4 (208 aa).

An S4 RNA-binding domain is found at 98–159; sequence RRLDNVVYRL…KSRNVAAISE (62 aa).

Belongs to the universal ribosomal protein uS4 family. Part of the 30S ribosomal subunit. Contacts protein S5. The interaction surface between S4 and S5 is involved in control of translational fidelity.

One of the primary rRNA binding proteins, it binds directly to 16S rRNA where it nucleates assembly of the body of the 30S subunit. Its function is as follows. With S5 and S12 plays an important role in translational accuracy. The polypeptide is Small ribosomal subunit protein uS4 (Trichlorobacter lovleyi (strain ATCC BAA-1151 / DSM 17278 / SZ) (Geobacter lovleyi)).